A 335-amino-acid polypeptide reads, in one-letter code: Phosphatidylglycerol--prolipoprotein diacylglyceryl transferase (335 aa).

The next 3 helical transmembrane spans lie at 31–51 (IYWY…TYSL), 67–87 (YIFL…LAIG), and 100–120 (LAIQ…FPLI). Residue Arg163 coordinates a 1,2-diacyl-sn-glycero-3-phospho-(1'-sn-glycerol). 3 consecutive transmembrane segments (helical) span residues 213–233 (PLFL…YFGL), 235–255 (YIKQ…YGVI), and 277–297 (SLLL…APIL).

Belongs to the Lgt family.

The protein resides in the cell membrane. It carries out the reaction L-cysteinyl-[prolipoprotein] + a 1,2-diacyl-sn-glycero-3-phospho-(1'-sn-glycerol) = an S-1,2-diacyl-sn-glyceryl-L-cysteinyl-[prolipoprotein] + sn-glycerol 1-phosphate + H(+). The protein operates within protein modification; lipoprotein biosynthesis (diacylglyceryl transfer). In terms of biological role, catalyzes the transfer of the diacylglyceryl group from phosphatidylglycerol to the sulfhydryl group of the N-terminal cysteine of a prolipoprotein, the first step in the formation of mature lipoproteins. This is Phosphatidylglycerol--prolipoprotein diacylglyceryl transferase from Ureaplasma urealyticum serovar 10 (strain ATCC 33699 / Western).